We begin with the raw amino-acid sequence, 302 residues long: tRNA pseudouridine synthase B (302 aa).

The active-site Nucleophile is Asp-38.

The protein belongs to the pseudouridine synthase TruB family. Type 1 subfamily.

The enzyme catalyses uridine(55) in tRNA = pseudouridine(55) in tRNA. Its function is as follows. Responsible for synthesis of pseudouridine from uracil-55 in the psi GC loop of transfer RNAs. This Ligilactobacillus salivarius (strain UCC118) (Lactobacillus salivarius) protein is tRNA pseudouridine synthase B.